Here is a 142-residue protein sequence, read N- to C-terminus: MAKKVQAYVKLQVAAGMANPSPPVGPALGQQGVNIMEFCKAFNARTESLEKGLPIPVVITVYADRSFTFVTKTPPAAVLLKKAAGIKSGSGKPNKDKVGKVTLDQVRQIAETKAADMTGASIETKMKSIAGTARSMGLVVEE.

The protein belongs to the universal ribosomal protein uL11 family. As to quaternary structure, part of the ribosomal stalk of the 50S ribosomal subunit. Interacts with L10 and the large rRNA to form the base of the stalk. L10 forms an elongated spine to which L12 dimers bind in a sequential fashion forming a multimeric L10(L12)X complex. Post-translationally, one or more lysine residues are methylated.

Functionally, forms part of the ribosomal stalk which helps the ribosome interact with GTP-bound translation factors. This chain is Large ribosomal subunit protein uL11, found in Haemophilus influenzae (strain PittGG).